The sequence spans 318 residues: Glutathione synthetase (318 aa).

The region spanning 128–313 (KLAILNFSRF…VAAMFADAVA (186 aa)) is the ATP-grasp domain. Position 154–210 (154–210 (LKEHGDIIIKPLDGMGGMGIFRLTEKDPNIGSILETLMQLDSRTIMAQRYIPEIVHG)) interacts with ATP. Mg(2+)-binding residues include glutamate 284 and asparagine 286.

Belongs to the prokaryotic GSH synthase family. Mg(2+) serves as cofactor. Requires Mn(2+) as cofactor.

It carries out the reaction gamma-L-glutamyl-L-cysteine + glycine + ATP = glutathione + ADP + phosphate + H(+). Its pathway is sulfur metabolism; glutathione biosynthesis; glutathione from L-cysteine and L-glutamate: step 2/2. This chain is Glutathione synthetase, found in Neisseria meningitidis serogroup A / serotype 4A (strain DSM 15465 / Z2491).